Consider the following 424-residue polypeptide: Serine--tRNA ligase (424 aa).

Residue 233 to 235 coordinates L-serine; it reads TAE. An ATP-binding site is contributed by 264–266; sequence RRE. Glu-287 provides a ligand contact to L-serine. 351–354 provides a ligand contact to ATP; that stretch reads EISS. Ser-387 contributes to the L-serine binding site.

Belongs to the class-II aminoacyl-tRNA synthetase family. Type-1 seryl-tRNA synthetase subfamily. As to quaternary structure, homodimer. The tRNA molecule binds across the dimer.

It is found in the cytoplasm. The catalysed reaction is tRNA(Ser) + L-serine + ATP = L-seryl-tRNA(Ser) + AMP + diphosphate + H(+). The enzyme catalyses tRNA(Sec) + L-serine + ATP = L-seryl-tRNA(Sec) + AMP + diphosphate + H(+). It participates in aminoacyl-tRNA biosynthesis; selenocysteinyl-tRNA(Sec) biosynthesis; L-seryl-tRNA(Sec) from L-serine and tRNA(Sec): step 1/1. In terms of biological role, catalyzes the attachment of serine to tRNA(Ser). Is also able to aminoacylate tRNA(Sec) with serine, to form the misacylated tRNA L-seryl-tRNA(Sec), which will be further converted into selenocysteinyl-tRNA(Sec). This chain is Serine--tRNA ligase, found in Acaryochloris marina (strain MBIC 11017).